Reading from the N-terminus, the 232-residue chain is MIIKKSGGRWQLSLLASVVISAFFLNTAYAWQQEYIVDTQPGLSTERYTWDSDHQPDYNDILSQRIQSSQRALGLEVNLAEETPVDVTSSMSMGWNFPLYEQVTTGPVAALHYDGTTTSMYNEFGDSTTTLTDPLWHASVSTLGWRVDSRLGDLRPWAQISYNQQFGENIWKAQSGLSRMTATNQNGNWLDVTVGADMLLNQNIAAYAALTQAENTTNNSDYLYTMGVSARF.

The region spanning 1-232 (MIIKKSGGRW…LYTMGVSARF (232 aa)) is the Autotransporter domain.

This is an uncharacterized protein from Escherichia coli (strain K12).